The chain runs to 300 residues: MSVTTPRRETSLLSRALRATAAAATAVVATVALAAPAQAANPYERGPNPTESMLEARSGPFSVSEERASRFGADGFGGGTIYYPRENNTYGAIAISPGYTGTQSSIAWLGERIASHGFVVIAIDTNTTLDQPDSRARQLNAALDYMLTDASSAVRNRIDASRLAVMGHSMGGGGTLRLASQRPDLKAAIPLTPWHLNKSWRDITVPTLIIGAEYDTIASVTLHSKPFYNSIPSPTDKAYLELDGASHFAPNITNKTIGMYSVAWLKRFVDEDTRYTQFLCPGPRTGLLSDVEEYRSTCPF.

Positions Met-1–Ala-39 are cleaved as a signal peptide. Tyr-99 lines the poly(ethylene terephthalate) pocket. Ser-169 acts as the Nucleophile in catalysis. Poly(ethylene terephthalate) contacts are provided by Met-170 and Trp-194. Ca(2+) is bound at residue Glu-213. The Charge relay system role is filled by Asp-215. Residue Asp-243 participates in Ca(2+) binding. Residue His-247 is the Charge relay system of the active site. The cysteines at positions 280 and 298 are disulfide-linked. Residue Glu-292 coordinates Ca(2+).

It belongs to the AB hydrolase superfamily. In terms of assembly, monomer. The cofactor is Ca(2+).

The protein resides in the secreted. It is found in the periplasm. The catalysed reaction is an acetyl ester + H2O = an aliphatic alcohol + acetate + H(+). It catalyses the reaction (ethylene terephthalate)(n) + H2O = (ethylene terephthalate)(n-1) + 4-[(2-hydroxyethoxy)carbonyl]benzoate + H(+). The enzyme catalyses a butanoate ester + H2O = an aliphatic alcohol + butanoate + H(+). It carries out the reaction cutin + H2O = cutin monomers.. The catalysed reaction is a hexanoate ester + H2O = an aliphatic alcohol + hexanoate + H(+). It catalyses the reaction an octanoate ester + H2O = an aliphatic alcohol + octanoate + H(+). Activated by calcium ions. Activated by magnesium ions. Activated by manganese ions. Inhibited by the serine hydrolase inhibitor phenylmethanesulfonyl fluoride (PMSF). Inhibited by the chelator ethylenediaminetetraacetic acid (EDTA). Inhibited by iron ions. Inhibited by aluminum ions. Inhibited by rubidium ions. Inhibited by lithium ions. Its function is as follows. Catalyzes the hydrolysis of cutin, a polyester that forms the structure of plant cuticle. Shows esterase activity towards p-nitrophenol-linked aliphatic esters (pNP-aliphatic esters). Capable of degrading the plastic poly(ethylene terephthalate) (PET), the most abundant polyester plastic in the world. Can also depolymerize the synthetic polyesters poly(epsilon-caprolactone) (PCL), poly(butylene succinate-co-adipate) (PBSA), poly(butylene succinate) (PBS), and poly(lactic acid) (PLA). The polypeptide is Cutinase est2 (Thermobifida alba (Thermomonospora alba)).